We begin with the raw amino-acid sequence, 237 residues long: Uridylate kinase (237 aa).

11–14 provides a ligand contact to ATP; the sequence is KLSG. Position 53 (Gly-53) interacts with UMP. Positions 54 and 58 each coordinate ATP. UMP is bound by residues Asp-73 and 134-141; that span reads TGNPFFTT. ATP-binding residues include Thr-161, Tyr-167, and Asp-170.

The protein belongs to the UMP kinase family. As to quaternary structure, homohexamer.

The protein localises to the cytoplasm. It carries out the reaction UMP + ATP = UDP + ADP. It participates in pyrimidine metabolism; CTP biosynthesis via de novo pathway; UDP from UMP (UMPK route): step 1/1. Its activity is regulated as follows. Inhibited by UTP. Catalyzes the reversible phosphorylation of UMP to UDP. This Nitrosomonas europaea (strain ATCC 19718 / CIP 103999 / KCTC 2705 / NBRC 14298) protein is Uridylate kinase.